We begin with the raw amino-acid sequence, 64 residues long: Large ribosomal subunit protein bL35 (64 aa).

The span at 1 to 42 (MPKAKTHSGASKRFRRTGTGKIVRQKANRRHLLEHKPTKRTR) shows a compositional bias: basic residues. Residues 1–64 (MPKAKTHSGA…NSRINKLLNG (64 aa)) are disordered. Polar residues predominate over residues 48-58 (TTVSAADNSRI).

This sequence belongs to the bacterial ribosomal protein bL35 family.

This chain is Large ribosomal subunit protein bL35, found in Mycolicibacterium smegmatis (strain ATCC 700084 / mc(2)155) (Mycobacterium smegmatis).